An 837-amino-acid chain; its full sequence is MTKVVAPVERVVFELNGERQEVAAADVEPSTTLLEFIRTRTPFRGPKLGCGEGGCGACVILIAKYNPKTDEVTEFNVNSCLTLLYSIHFCSIITTEGLGNTKDGFHSIQKRMSGFHASQCGFCTPGMCMSIFSSLVNADKSKKPAPPKGFSKLSISEAERSFSGNMCRCTGYRPIVDACKSFESDVDLEDLGLNIFWKKGDKHPDPTKLPSYTLGGGICTFPDFLKSEIKSSLDFNDASISGPREGWYCPKSIKQYYKLVNSGLFSESSVKVVVGNTSTGVYKDQDLYDKYIDIAGIPELSAIVRKDKGIEIGAATSISRTIEILNQESELTSSPNGSVVFRKLAEHMSKVASPFVRNTASIGGNIILAHKYPFRSDIATILLGAAATVNLQVSSKTLHVNLEQFLEQPPLDHSTLLLSIFIPHWASDCKKEHTLVFETYRAAPRPLGNAVSYVNSAFLGHVSLDKSSGDNILSNLHLAFGAYGTKHAIRARKVEEYLTGKILSASVVLEAIRLLRETIVPVEGTTHPEYRVSVAVGFLFSFLSPLCKGVIESGKTLSISEDLVDTDNVHNKPLSSRRETLSDDEYTPVGDPIKKYKVEVQASGEAIYVDDIPAPKNCLYGEFIYSTQPLANVKSIKFKPSLASKKIITVVSAKDIPTGGRNIGSTFWFGDEEPLFGDPIAEFAGQVLGVVIAETQPYADMAAKQAVVEYTTDGLKAPILTVEQAVQSNSYFQVPPERAPKQVGDFSNGMAEADHKIMSEEVKLSSQYYFYMETQTALAIPDEDNTMTVYSSSQFSELAQNVISKCLGIPFNNVRVITRRAGGGFGGKVVRSLHVRI.

In terms of domain architecture, 2Fe-2S ferredoxin-type spans 9 to 98 (ERVVFELNGE…FCSIITTEGL (90 aa)). Cys-50, Cys-55, Cys-58, and Cys-80 together coordinate [2Fe-2S] cluster. Residues 240–427 (ISGPREGWYC…LSIFIPHWAS (188 aa)) enclose the FAD-binding PCMH-type domain.

It belongs to the xanthine dehydrogenase family. In terms of assembly, aldehyde oxidases (AO) are homodimers and heterodimers of AO subunits. Requires [2Fe-2S] cluster as cofactor. It depends on FAD as a cofactor. Mo-molybdopterin is required as a cofactor.

It catalyses the reaction an aldehyde + O2 + H2O = a carboxylate + H2O2 + H(+). This chain is Probable aldehyde oxidase 4, found in Oryza sativa subsp. japonica (Rice).